The chain runs to 194 residues: Mediator of RNA polymerase II transcription subunit 8 (194 aa).

Belongs to the Mediator complex subunit 8 family. In terms of assembly, component of the Mediator complex.

It is found in the nucleus. Component of the Mediator complex, a coactivator involved in the regulated transcription of nearly all RNA polymerase II-dependent genes. Mediator functions as a bridge to convey information from gene-specific regulatory proteins to the basal RNA polymerase II transcription machinery. Mediator is recruited to promoters by direct interactions with regulatory proteins and serves as a scaffold for the assembly of a functional preinitiation complex with RNA polymerase II and the general transcription factors. The protein is Mediator of RNA polymerase II transcription subunit 8 (MED8) of Yarrowia lipolytica (strain CLIB 122 / E 150) (Yeast).